A 332-amino-acid chain; its full sequence is Putative ketol-acid reductoisomerase 3 (332 aa).

Positions M1 to S182 constitute a KARI N-terminal Rossmann domain. The 147-residue stretch at S183–K329 folds into the KARI C-terminal knotted domain.

This sequence belongs to the ketol-acid reductoisomerase family.

It catalyses the reaction (2R)-2,3-dihydroxy-3-methylbutanoate + NADP(+) = (2S)-2-acetolactate + NADPH + H(+). The enzyme catalyses (2R,3R)-2,3-dihydroxy-3-methylpentanoate + NADP(+) = (S)-2-ethyl-2-hydroxy-3-oxobutanoate + NADPH + H(+). Its pathway is amino-acid biosynthesis; L-isoleucine biosynthesis; L-isoleucine from 2-oxobutanoate: step 2/4. It functions in the pathway amino-acid biosynthesis; L-valine biosynthesis; L-valine from pyruvate: step 2/4. In Saccharolobus solfataricus (strain ATCC 35092 / DSM 1617 / JCM 11322 / P2) (Sulfolobus solfataricus), this protein is Putative ketol-acid reductoisomerase 3 (ilvC3).